A 184-amino-acid chain; its full sequence is UPF0301 protein Rsph17029_2659 (184 aa).

Belongs to the UPF0301 (AlgH) family.

The chain is UPF0301 protein Rsph17029_2659 from Cereibacter sphaeroides (strain ATCC 17029 / ATH 2.4.9) (Rhodobacter sphaeroides).